A 473-amino-acid chain; its full sequence is Probable glucose-6-phosphate 1-dehydrogenase C7.13c (473 aa).

The NADP(+) site is built by arginine 43, tyrosine 121, and lysine 144. D-glucose 6-phosphate contacts are provided by residues lysine 144, 174–178 (HYTAK), glutamate 213, and aspartate 232. Residue histidine 237 is the Proton acceptor of the active site. Residue lysine 331 participates in D-glucose 6-phosphate binding. Lysine 341 serves as a coordination point for NADP(+). Glutamine 366 contributes to the D-glucose 6-phosphate binding site.

This sequence belongs to the glucose-6-phosphate dehydrogenase family.

Its subcellular location is the cytoplasm. The catalysed reaction is D-glucose 6-phosphate + NADP(+) = 6-phospho-D-glucono-1,5-lactone + NADPH + H(+). It functions in the pathway carbohydrate degradation; pentose phosphate pathway; D-ribulose 5-phosphate from D-glucose 6-phosphate (oxidative stage): step 1/3. Catalyzes the rate-limiting step of the oxidative pentose-phosphate pathway, which represents a route for the dissimilation of carbohydrates besides glycolysis. The main function of this enzyme is to provide reducing power (NADPH) and pentose phosphates for fatty acid and nucleic acid synthesis. This chain is Probable glucose-6-phosphate 1-dehydrogenase C7.13c, found in Schizosaccharomyces pombe (strain 972 / ATCC 24843) (Fission yeast).